A 317-amino-acid polypeptide reads, in one-letter code: Pyridoxal 5'-phosphate synthase subunit PdxS (317 aa).

Position 47 (Asp-47) interacts with D-ribose 5-phosphate. Catalysis depends on Lys-104, which acts as the Schiff-base intermediate with D-ribose 5-phosphate. Gly-176 serves as a coordination point for D-ribose 5-phosphate. Arg-188 serves as a coordination point for D-glyceraldehyde 3-phosphate. D-ribose 5-phosphate contacts are provided by residues Gly-237 and 258-259 (GS).

The protein belongs to the PdxS/SNZ family. In terms of assembly, in the presence of PdxT, forms a dodecamer of heterodimers.

It catalyses the reaction aldehydo-D-ribose 5-phosphate + D-glyceraldehyde 3-phosphate + L-glutamine = pyridoxal 5'-phosphate + L-glutamate + phosphate + 3 H2O + H(+). The protein operates within cofactor biosynthesis; pyridoxal 5'-phosphate biosynthesis. Catalyzes the formation of pyridoxal 5'-phosphate from ribose 5-phosphate (RBP), glyceraldehyde 3-phosphate (G3P) and ammonia. The ammonia is provided by the PdxT subunit. Can also use ribulose 5-phosphate and dihydroxyacetone phosphate as substrates, resulting from enzyme-catalyzed isomerization of RBP and G3P, respectively. This is Pyridoxal 5'-phosphate synthase subunit PdxS from Corynebacterium glutamicum (strain ATCC 13032 / DSM 20300 / JCM 1318 / BCRC 11384 / CCUG 27702 / LMG 3730 / NBRC 12168 / NCIMB 10025 / NRRL B-2784 / 534).